The sequence spans 2038 residues: HEAT repeat-containing protein 5A (2038 aa).

HEAT repeat units lie at residues Glu-850–Asp-887 and Leu-1082–Asp-1119. The tract at residues Arg-1646 to Asp-1668 is disordered. At Ser-1647 the chain carries Phosphoserine.

This sequence belongs to the HEATR5 family.

The protein is HEAT repeat-containing protein 5A (Heatr5a) of Mus musculus (Mouse).